The chain runs to 96 residues: Protein Vpr (96 aa).

Positions 1 to 42 (MEQAPEDQGPQREPYNEWTLELLEELKSEAVRHFPRIWLHSL) are homooligomerization. Phosphoserine; by host occurs at positions 79, 94, and 96.

Belongs to the HIV-1 VPR protein family. In terms of assembly, homooligomer, may form homodimer. Interacts with p6-gag region of the Pr55 Gag precursor protein through a (Leu-X-X)4 motif near the C-terminus of the P6gag protein. Interacts with host UNG. May interact with host RAD23A/HHR23A. Interacts with host VPRBP/DCAF1, leading to hijack the CUL4A-RBX1-DDB1-DCAF1/VPRBP complex, mediating ubiquitination of host proteins such as TERT and ZGPAT and arrest of the cell cycle in G2 phase. In terms of processing, phosphorylated on several residues by host. These phosphorylations regulate VPR activity for the nuclear import of the HIV-1 pre-integration complex.

It is found in the virion. The protein resides in the host nucleus. Its subcellular location is the host extracellular space. Functionally, during virus replication, may deplete host UNG protein, and incude G2-M cell cycle arrest. Acts by targeting specific host proteins for degradation by the 26S proteasome, through association with the cellular CUL4A-DDB1 E3 ligase complex by direct interaction with host VPRPB/DCAF-1. Cell cycle arrest reportedly occurs within hours of infection and is not blocked by antiviral agents, suggesting that it is initiated by the VPR carried into the virion. Additionally, VPR induces apoptosis in a cell cycle dependent manner suggesting that these two effects are mechanistically linked. Detected in the serum and cerebrospinal fluid of AIDS patient, VPR may also induce cell death to bystander cells. During virus entry, plays a role in the transport of the viral pre-integration (PIC) complex to the host nucleus. This function is crucial for viral infection of non-dividing macrophages. May act directly at the nuclear pore complex, by binding nucleoporins phenylalanine-glycine (FG)-repeat regions. In Homo sapiens (Human), this protein is Protein Vpr.